Consider the following 36-residue polypeptide: Ostricacin-1 (36 aa).

Cystine bridges form between C3-C29, C8-C23, and C13-C30.

The protein localises to the secreted. Functionally, has antibacterial activity against the Gram-positive bacteria S.aureus 1056 MRSA (MIC=1.25 ug/ml) and S.aureus NCTC 4163 (MIC=6.7 ug/ml), and the Gram-negative bacteria E.coli O157:H7 (MIC=0.96 ug/ml) and E.coli 0111 (MIC=6.7 ug/ml). Does not have antifungal activity against the yeast C.albicans 3153A. The sequence is that of Ostricacin-1 from Struthio camelus (Common ostrich).